A 486-amino-acid chain; its full sequence is Sensor protein PhoQ (486 aa).

Residues 1–16 (MKKLLHLFFPLSLRVR) are Cytoplasmic-facing. The helical transmembrane segment at 17–37 (FLLATAAVVLVLSLAYGMVAL) threads the bilayer. Residues 38 to 194 (IGYSVSFDKT…LKSSYMVWSW (157 aa)) are Periplasmic-facing. A divalent metal cation contacts are provided by Asp151 and Asp152. Residues 195 to 215 (FIYVLSANLLLVIPLLWVAAW) form a helical membrane-spanning segment. The region spanning 215–266 (WWSLRPIEALAKEVRELEEHNRELLNPATTRELTSLVRNLNRLLKSERERYD) is the HAMP domain. At 216-486 (WSLRPIEALA…GRQHSTPKDE (271 aa)) the chain is on the cytoplasmic side. A Histidine kinase domain is found at 274–480 (DLTHSLKTPL…RMEVIFGRQH (207 aa)). The residue at position 277 (His277) is a Phosphohistidine; by autocatalysis. Mg(2+) is bound at residue Asn385. Residues 385 to 393 (NVLDNACKY), 415 to 420 (DDGPGI), and 434 to 446 (RVDTLRPGQGVGL) each bind ATP. Residue Gln442 coordinates Mg(2+).

Homodimer.

The protein resides in the cell inner membrane. The enzyme catalyses ATP + protein L-histidine = ADP + protein N-phospho-L-histidine.. Member of the two-component regulatory system PhoP/PhoQ involved in virulence, adaptation to low Mg(2+) environments and the control of acid resistance genes. In low periplasmic Mg(2+), PhoQ functions as a membrane-associated protein kinase that undergoes autophosphorylation and subsequently transfers the phosphate to PhoP, resulting in the expression of PhoP-activated genes (PAG) and repression of PhoP-repressed genes (PRG). In high periplasmic Mg(2+), acts as a protein phosphatase that dephosphorylates phospho-PhoP, which results in the repression of PG and may lead to expression of some PRG. This chain is Sensor protein PhoQ (phoQ), found in Escherichia coli O157:H7.